A 528-amino-acid chain; its full sequence is UDP-glucuronosyltransferase 2B19 (528 aa).

Residues 1–21 (MSMKWTSALLLIQLSCYLSFG) form the signal peptide. The residue at position 135 (K135) is an N6-succinyllysine. The N-linked (GlcNAc...) asparagine glycan is linked to N315. The chain crosses the membrane as a helical span at residues 493 to 513 (VIGFLLACVATVIFIITKCLF).

Belongs to the UDP-glycosyltransferase family. Expressed in liver, ovary, prostate, colon, kidney, pancreas, brain, cerebellum, mammary gland and epididymis. Not expressed in small intestine, spleen, bladder, adrenal gland and testis.

The protein resides in the microsome membrane. Its subcellular location is the endoplasmic reticulum membrane. The catalysed reaction is glucuronate acceptor + UDP-alpha-D-glucuronate = acceptor beta-D-glucuronoside + UDP + H(+). In terms of biological role, UDPGT is of major importance in the conjugation and subsequent elimination of potentially toxic xenobiotics and endogenous compounds. This isozyme displays activity toward several classes of xenobiotic substrates: eugenol, 4-methyllumbelliferone, p-nitrophenol, 1-naphthol, p,p'-biphenol, naringenin and o,o'-biphenol. Active also on 3a-hydroxy and 17b-hydroxy positions of steroids. Contributes to the formation of androgen glucuronide in extrahepatic steroid target tissues such as the prostate. The protein is UDP-glucuronosyltransferase 2B19 (UGT2B19) of Macaca fascicularis (Crab-eating macaque).